The sequence spans 59 residues: Protein translocase subunit SecE (59 aa).

Residues 30 to 50 (ITVITTVIFFAIFFALIDSGI) traverse the membrane as a helical segment.

This sequence belongs to the SecE/SEC61-gamma family. In terms of assembly, component of the Sec protein translocase complex. Heterotrimer consisting of SecY, SecE and SecG subunits. The heterotrimers can form oligomers, although 1 heterotrimer is thought to be able to translocate proteins. Interacts with the ribosome. Interacts with SecDF, and other proteins may be involved. Interacts with SecA.

It is found in the cell membrane. In terms of biological role, essential subunit of the Sec protein translocation channel SecYEG. Clamps together the 2 halves of SecY. May contact the channel plug during translocation. The chain is Protein translocase subunit SecE from Bacillus licheniformis.